Here is a 425-residue protein sequence, read N- to C-terminus: Glutamate-1-semialdehyde 2,1-aminomutase (425 aa).

Position 265 is an N6-(pyridoxal phosphate)lysine (Lys-265).

This sequence belongs to the class-III pyridoxal-phosphate-dependent aminotransferase family. HemL subfamily. Homodimer. Pyridoxal 5'-phosphate is required as a cofactor.

It is found in the cytoplasm. The catalysed reaction is (S)-4-amino-5-oxopentanoate = 5-aminolevulinate. It participates in porphyrin-containing compound metabolism; protoporphyrin-IX biosynthesis; 5-aminolevulinate from L-glutamyl-tRNA(Glu): step 2/2. The protein is Glutamate-1-semialdehyde 2,1-aminomutase of Opitutus terrae (strain DSM 11246 / JCM 15787 / PB90-1).